The chain runs to 145 residues: Peptidyl-prolyl cis-trans isomerase (145 aa).

Positions Met-1–Ala-145 constitute a PPIase cyclophilin-type domain.

This sequence belongs to the cyclophilin-type PPIase family.

It catalyses the reaction [protein]-peptidylproline (omega=180) = [protein]-peptidylproline (omega=0). In terms of biological role, PPIases accelerate the folding of proteins. It catalyzes the cis-trans isomerization of proline imidic peptide bonds in oligopeptides. This is Peptidyl-prolyl cis-trans isomerase (rot) from Synechococcus elongatus (strain ATCC 33912 / PCC 7942 / FACHB-805) (Anacystis nidulans R2).